A 121-amino-acid polypeptide reads, in one-letter code: Large ribosomal subunit protein bL12 (121 aa).

The protein belongs to the bacterial ribosomal protein bL12 family. As to quaternary structure, homodimer. Part of the ribosomal stalk of the 50S ribosomal subunit. Forms a multimeric L10(L12)X complex, where L10 forms an elongated spine to which 2 to 4 L12 dimers bind in a sequential fashion. Binds GTP-bound translation factors.

In terms of biological role, forms part of the ribosomal stalk which helps the ribosome interact with GTP-bound translation factors. Is thus essential for accurate translation. This Pseudomonas putida (strain GB-1) protein is Large ribosomal subunit protein bL12.